A 166-amino-acid polypeptide reads, in one-letter code: Ubiquitin-fold modifier-conjugating enzyme 1 (166 aa).

C116 (glycyl thioester intermediate) is an active-site residue.

The protein belongs to the ubiquitin-conjugating enzyme family. UFC1 subfamily.

Functionally, E2-like enzyme which forms an intermediate with UFM1 via a thioester linkage. The chain is Ubiquitin-fold modifier-conjugating enzyme 1 from Monosiga brevicollis (Choanoflagellate).